Consider the following 701-residue polypeptide: Octapeptide-repeat antigen (701 aa).

Residues Asn40, Asn41, Asn76, Asn111, Asn127, Asn139, Asn181, Asn189, Asn311, Asn334, Asn344, Asn477, and Asn557 are each glycosylated (N-linked (GlcNAc...) asparagine). Positions 120 to 140 (IENEEKSNGSRKSSNKQKYNE) are disordered. Residues 641-701 (LSGSSTGSMN…IKSGSKDHIK (61 aa)) form a disordered region. The span at 642-655 (SGSSTGSMNNGKSG) shows a compositional bias: low complexity. A run of 6 repeats spans residues 653 to 660 (KSGSKSDI), 661 to 668 (KGGSKDDI), 669 to 676 (KSGSKDDI), 677 to 684 (KSGSKADI), 685 to 692 (KSGSKDDI), and 693 to 700 (KSGSKDHI). Positions 653 to 700 (KSGSKSDIKGGSKDDIKSGSKDDIKSGSKADIKSGSKDDIKSGSKDHI) are 6 X 8 AA approximate tandem repeats. The segment covering 656–701 (SKSDIKGGSKDDIKSGSKDDIKSGSKADIKSGSKDDIKSGSKDHIK) has biased composition (basic and acidic residues).

Belongs to the ATP-dependent AMP-binding enzyme family.

The protein localises to the parasitophorous vacuole. The sequence is that of Octapeptide-repeat antigen from Plasmodium falciparum (isolate NF7 / Ghana).